The following is a 283-amino-acid chain: MITTQSISDIRAQVKAWRQKGETVAFVPTMGNLHLGHITLVKEAKTRADHVVASIFVNPMQFGQNEDLDAYPRTLAEDQAALTAAGAELLFTPTPEIIYPKGMDAQTYVEVPSISDLLCGASRPGHFRGVATVVCKLFNIVQPDIAVFGQKDFQQLLVIRTMVDDLSMPIEIVGVDTIREASGLAMSSRNGYLSAEQKDQASQIKRSLDKMAESLKAGLAFKDIITQAQTELAEAGFRNDYLEIRNANNFAIADAGDVKLVILVAAYMGSTRLIDNQVVTLNA.

30–37 (MGNLHLGH) provides a ligand contact to ATP. His-37 acts as the Proton donor in catalysis. Position 61 (Gln-61) interacts with (R)-pantoate. Gln-61 serves as a coordination point for beta-alanine. 149–152 (GQKD) contributes to the ATP binding site. Gln-155 is a (R)-pantoate binding site. Residues Ile-178 and 186-189 (MSSR) each bind ATP.

It belongs to the pantothenate synthetase family. In terms of assembly, homodimer.

The protein resides in the cytoplasm. It carries out the reaction (R)-pantoate + beta-alanine + ATP = (R)-pantothenate + AMP + diphosphate + H(+). It participates in cofactor biosynthesis; (R)-pantothenate biosynthesis; (R)-pantothenate from (R)-pantoate and beta-alanine: step 1/1. In terms of biological role, catalyzes the condensation of pantoate with beta-alanine in an ATP-dependent reaction via a pantoyl-adenylate intermediate. In Shewanella halifaxensis (strain HAW-EB4), this protein is Pantothenate synthetase.